Here is a 286-residue protein sequence, read N- to C-terminus: Putative 2-aminoethylphosphonate transport system permease protein PhnU (286 aa).

The next 6 membrane-spanning stretches (helical) occupy residues 19-39 (WLLLPLLVLATLFFWPLSLIV), 76-96 (FFATAGCLLLGSAMSLILVFI), 111-131 (FIALPTFLITLAFTFIYGSAG), 150-170 (FLYSMQGVILAEITVFTPLVM), 202-222 (VIFPAALPALMAGGSLCLLLT), and 254-274 (YTVACMIALINIVLSLGLFSL). The ABC transmembrane type-1 domain occupies 68 to 275 (LLNTLQIAFF…VLSLGLFSLY (208 aa)).

It belongs to the binding-protein-dependent transport system permease family.

Its subcellular location is the cell inner membrane. In terms of biological role, probably part of the PhnSTUV complex (TC 3.A.1.11.5) involved in 2-aminoethylphosphonate import. Probably responsible for the translocation of the substrate across the membrane. The protein is Putative 2-aminoethylphosphonate transport system permease protein PhnU (phnU) of Salmonella choleraesuis (strain SC-B67).